Here is a 914-residue protein sequence, read N- to C-terminus: DNA mismatch repair protein MutS (914 aa).

Residues 1-25 (MDKKNDHKNNLIPQPASSFASSQER) form a disordered region. Positions 11-25 (LIPQPASSFASSQER) are enriched in polar residues. 662–669 (GPNMGGKS) is a binding site for ATP.

This sequence belongs to the DNA mismatch repair MutS family.

Functionally, this protein is involved in the repair of mismatches in DNA. It is possible that it carries out the mismatch recognition step. This protein has a weak ATPase activity. The chain is DNA mismatch repair protein MutS from Bartonella tribocorum (strain CIP 105476 / IBS 506).